The chain runs to 285 residues: Nucleotide-binding protein PFLU_0879 (285 aa).

Residue 8–15 (GRSGSGKS) coordinates ATP. 60 to 63 (DARN) provides a ligand contact to GTP.

The protein belongs to the RapZ-like family.

Displays ATPase and GTPase activities. This chain is Nucleotide-binding protein PFLU_0879, found in Pseudomonas fluorescens (strain SBW25).